Reading from the N-terminus, the 272-residue chain is Phosphatidylglycerol--prolipoprotein diacylglyceryl transferase (272 aa).

4 consecutive transmembrane segments (helical) span residues 15–35 (LGPLYVHMYSVFMLAGALVLF), 53–73 (AFAVTSLLIPVILGARLWHVV), 90–110 (IWEGGLGFIGGVFSGLICFFV), and 117–137 (VPPFTFLDALAPGILAALCFA). Arg-138 is an a 1,2-diacyl-sn-glycero-3-phospho-(1'-sn-glycerol) binding site. 3 helical membrane passes run 174–194 (FHPIFLYEIILNVFIIVILLV), 199–219 (VFVKTVFPKGSVFAAFLVLYG), and 237–257 (FGLDLNYVGAAAMIIVGVLIA).

It belongs to the Lgt family.

It localises to the cell membrane. The enzyme catalyses L-cysteinyl-[prolipoprotein] + a 1,2-diacyl-sn-glycero-3-phospho-(1'-sn-glycerol) = an S-1,2-diacyl-sn-glyceryl-L-cysteinyl-[prolipoprotein] + sn-glycerol 1-phosphate + H(+). It participates in protein modification; lipoprotein biosynthesis (diacylglyceryl transfer). In terms of biological role, catalyzes the transfer of the diacylglyceryl group from phosphatidylglycerol to the sulfhydryl group of the N-terminal cysteine of a prolipoprotein, the first step in the formation of mature lipoproteins. The sequence is that of Phosphatidylglycerol--prolipoprotein diacylglyceryl transferase from Tropheryma whipplei (strain Twist) (Whipple's bacillus).